We begin with the raw amino-acid sequence, 794 residues long: MRVDYDVAAALRHEGLKPDDYDEICRRLQRAPNRVELGMFGVMWSEHCCYRNSRPLLSSFPTTGHRILVGPGENAGVVDLGDGQSLAFKIESHNHPSALEPFQGAATGVGGILRDIFTMGARPIALLNALRFGPLEDERNVGLIEGVVEGIAHYGNCVGVPTVGGEVAFDSSYSGNPLVNAMALGLMETDEIVCSGAHGVGYPVVYVGSTTGRDGMGGASFASAELTKASLDDRPAVQVGDPFLEKGLIEACLEAFKSGDVVAAQDMGAAGLTCSCSEMAAKGGLGIELDLDRVPARELGMTPYEFLLSESQERMLFVVKPGQEQSLMERFIRWGLQAAIVGCVLEKKVVRVLQKGEVVAEVPANALADDTPIDRHELVSDPPLEIQAKWDWQEDLLPVVGLKGINLNSQSHFGSNLSWDEILLKLLDDPTIASKRWVFRQYDHQVQANTVSAPGVSDAAVVRLRPQQGEGSVDEVNRGVAAVVDCPNRWVFLDPERGAIAAVAEAARNLSCVGAEPLAVTDNLNFPSPETPTGYWQLALACRGLSKACKSLSTPVTGGNVSLYNETRLADGEIQPIHPTPVVGMVGLVHDLANVCGQAWLEPGDLIWLLGVPIDTTVAVDPRVSLAGSSYLECIHGLVTGRPPEIDLKLECLVQSFLRNSITEGFVRSAHDLSDGGLAVAVAECCIAGNLGAHLELPSSDARLDRLLFAEGGSRILVSVPSTQAVAWQKVLNQAKTASPGAVFDQYLGVVTADEELLITQAGNRLVQLPLNQLRECFEQAIPRRMGLDLSSSV.

Residue histidine 47 is part of the active site. 2 residues coordinate ATP: tyrosine 50 and lysine 89. Position 91 (glutamate 91) interacts with Mg(2+). Substrate is bound by residues 92 to 95 (SHNH) and arginine 114. The active-site Proton acceptor is histidine 93. Aspartate 115 serves as a coordination point for Mg(2+). Glutamine 238 provides a ligand contact to substrate. Residue aspartate 266 participates in Mg(2+) binding. 310–312 (ESQ) serves as a coordination point for substrate. Aspartate 522 and glycine 559 together coordinate ATP. A Mg(2+)-binding site is contributed by asparagine 560. Serine 562 contacts substrate.

It belongs to the FGAMS family. Monomer. Part of the FGAM synthase complex composed of 1 PurL, 1 PurQ and 2 PurS subunits.

It is found in the cytoplasm. The catalysed reaction is N(2)-formyl-N(1)-(5-phospho-beta-D-ribosyl)glycinamide + L-glutamine + ATP + H2O = 2-formamido-N(1)-(5-O-phospho-beta-D-ribosyl)acetamidine + L-glutamate + ADP + phosphate + H(+). It functions in the pathway purine metabolism; IMP biosynthesis via de novo pathway; 5-amino-1-(5-phospho-D-ribosyl)imidazole from N(2)-formyl-N(1)-(5-phospho-D-ribosyl)glycinamide: step 1/2. Its function is as follows. Part of the phosphoribosylformylglycinamidine synthase complex involved in the purines biosynthetic pathway. Catalyzes the ATP-dependent conversion of formylglycinamide ribonucleotide (FGAR) and glutamine to yield formylglycinamidine ribonucleotide (FGAM) and glutamate. The FGAM synthase complex is composed of three subunits. PurQ produces an ammonia molecule by converting glutamine to glutamate. PurL transfers the ammonia molecule to FGAR to form FGAM in an ATP-dependent manner. PurS interacts with PurQ and PurL and is thought to assist in the transfer of the ammonia molecule from PurQ to PurL. In Prochlorococcus marinus (strain MIT 9303), this protein is Phosphoribosylformylglycinamidine synthase subunit PurL.